A 352-amino-acid chain; its full sequence is 3-isopropylmalate dehydrogenase (352 aa).

Arg-91, Arg-101, Arg-129, and Asp-218 together coordinate substrate. Mg(2+) is bound by residues Asp-218, Asp-242, and Asp-246. Residue 281–293 (GSAPDIAGKGLAN) participates in NAD(+) binding.

Belongs to the isocitrate and isopropylmalate dehydrogenases family. LeuB type 1 subfamily. Homodimer. It depends on Mg(2+) as a cofactor. Mn(2+) serves as cofactor.

It localises to the cytoplasm. It carries out the reaction (2R,3S)-3-isopropylmalate + NAD(+) = 4-methyl-2-oxopentanoate + CO2 + NADH. Its pathway is amino-acid biosynthesis; L-leucine biosynthesis; L-leucine from 3-methyl-2-oxobutanoate: step 3/4. Functionally, catalyzes the oxidation of 3-carboxy-2-hydroxy-4-methylpentanoate (3-isopropylmalate) to 3-carboxy-4-methyl-2-oxopentanoate. The product decarboxylates to 4-methyl-2 oxopentanoate. This chain is 3-isopropylmalate dehydrogenase, found in Novosphingobium aromaticivorans (strain ATCC 700278 / DSM 12444 / CCUG 56034 / CIP 105152 / NBRC 16084 / F199).